The primary structure comprises 1045 residues: MDIS1-interacting receptor like kinase 2 (1045 aa).

The N-terminal stretch at 1 to 43 (MNKTNPERKISLTSFKERMACKEKPRDLQVLLIISIVLSCSFA) is a signal peptide. Residues 44–709 (VSATVEEANA…SKKSHKDRNL (666 aa)) lie on the Extracellular side of the membrane. Residues Asn-63, Asn-77, Asn-99, and Asn-119 are each glycosylated (N-linked (GlcNAc...) asparagine). LRR repeat units follow at residues 92–116 (LGSI…PFSS), 117–140 (LPNL…LWGR), 141–165 (FSKL…LGDL), 166–189 (SNLD…IGRL), 191–212 (KVTE…SFGN), 213–237 (LTKL…IGNL), 238–260 (PNLR…SFGN), 262–285 (KNVT…IGNM), 286–309 (TALD…LGNI), 311–333 (TLAV…LGEM), 334–356 (ESMI…SFGK), 357–381 (LTAL…IANS), 383–405 (ELTV…ICRG), 406–429 (GKLE…LRDC), 431–452 (SLIR…AFGV), 453–476 (YPTL…NWEQ), 477–501 (SQKL…IWNM), 502–525 (TQLS…ISNI), 527–549 (RISK…IRLL), 550–573 (TNLE…LNNL), 575–597 (RLYY…LTKL), 598–620 (SQLQ…QFRS), 621–644 (LQNL…SFKD), and 646–670 (LALT…AFRN). Asn-179 and Asn-212 each carry an N-linked (GlcNAc...) asparagine glycan. 3 N-linked (GlcNAc...) asparagine glycosylation sites follow: Asn-249, Asn-263, and Asn-284. Asn-323 carries an N-linked (GlcNAc...) asparagine glycan. 3 N-linked (GlcNAc...) asparagine glycosylation sites follow: Asn-380, Asn-393, and Asn-410. 2 N-linked (GlcNAc...) asparagine glycosylation sites follow: Asn-487 and Asn-500. Asn-580 is a glycosylation site (N-linked (GlcNAc...) asparagine). Residue Asn-633 is glycosylated (N-linked (GlcNAc...) asparagine). Asn-687 carries an N-linked (GlcNAc...) asparagine glycan. A helical transmembrane segment spans residues 710 to 730 (IIYILVPIIGAIIILSVCAGI). Residues 731-1045 (FICFRKRTKQ…TMLSISTAFS (315 aa)) lie on the Cytoplasmic side of the membrane. The residue at position 772 (Thr-772) is a Phosphothreonine. In terms of domain architecture, Protein kinase spans 775-1045 (FDPKYLIGTG…TMLSISTAFS (271 aa)). ATP is bound by residues 781–789 (IGTGGHGKV) and Lys-802. Tyr-853 and Tyr-892 each carry phosphotyrosine. Asp-905 acts as the Proton acceptor in catalysis. At Ser-938 the chain carries Phosphoserine. Phosphotyrosine occurs at positions 946 and 953.

It belongs to the protein kinase superfamily. Ser/Thr protein kinase family. As to quaternary structure, interacts with MDIS1 and LURE1.2. Binds to SCOOP12; this interaction triggers the formation of complex between MIK2 and the BAK1/SERK3 and SERK4 coreceptors. As to expression, expressed in pollen tubes. Highly expressed in shoots, roots and leaves.

It is found in the cell membrane. It carries out the reaction L-seryl-[protein] + ATP = O-phospho-L-seryl-[protein] + ADP + H(+). It catalyses the reaction L-threonyl-[protein] + ATP = O-phospho-L-threonyl-[protein] + ADP + H(+). Its function is as follows. Acts as a receptor of SCOOP peptides from Brassicaceae plants regulating multiple processing including plant growth, development and stress responses. Perception of SCOOP peptides induces the association of MIK2 with the coreceptors BAK1/SERK3 and SERK4 and relays the signaling through the activation of receptor-like cytosolic kinases (RLCKs) BIK1 and PBL1. Also able to detect SCOOP-like proteins (SCOOPL) present in fungal Fusarium spp. and bacterial Comamonadaceae to elicit various immune responses, including growth inhibition, ROS production, calcium Ca(2+) influx, MAPK activation and MYB51 promoter activation in roots, thus being required for resistance to several root pathogens. Involved in the pollen tube perception of the female signal. Required to trigger defense responses toward generalist herbivores such as Spodoptera littoralis, probably via the activation of jasmonate and indole glucosinolate biosynthesis. The polypeptide is MDIS1-interacting receptor like kinase 2 (Arabidopsis thaliana (Mouse-ear cress)).